Reading from the N-terminus, the 382-residue chain is Lipid-A-disaccharide synthase (382 aa).

It belongs to the LpxB family.

It catalyses the reaction 2-N,3-O-bis[(3R)-3-hydroxytetradecanoyl]-alpha-D-glucosaminyl 1-phosphate + UDP-2-N,3-O-bis[(3R)-3-hydroxytetradecanoyl]-alpha-D-glucosamine = lipid A disaccharide (E. coli) + UDP + H(+). The enzyme catalyses a lipid X + a UDP-2-N,3-O-bis[(3R)-3-hydroxyacyl]-alpha-D-glucosamine = a lipid A disaccharide + UDP + H(+). The protein operates within glycolipid biosynthesis; lipid IV(A) biosynthesis; lipid IV(A) from (3R)-3-hydroxytetradecanoyl-[acyl-carrier-protein] and UDP-N-acetyl-alpha-D-glucosamine: step 5/6. In terms of biological role, condensation of UDP-2,3-diacylglucosamine and 2,3-diacylglucosamine-1-phosphate to form lipid A disaccharide, a precursor of lipid A, a phosphorylated glycolipid that anchors the lipopolysaccharide to the outer membrane of the cell. The sequence is that of Lipid-A-disaccharide synthase from Serratia proteamaculans (strain 568).